A 370-amino-acid chain; its full sequence is tRNA-specific 2-thiouridylase MnmA (370 aa).

Residues 12–19 (GLSGGVDS) and Met38 contribute to the ATP site. Residues 98 to 100 (NPD) form an interaction with target base in tRNA region. Cys103 serves as the catalytic Nucleophile. A disulfide bridge connects residues Cys103 and Cys201. Gly127 provides a ligand contact to ATP. Residues 151–153 (KDQ) are interaction with tRNA. The Cysteine persulfide intermediate role is filled by Cys201. Residues 319-320 (RY) are interaction with tRNA.

This sequence belongs to the MnmA/TRMU family.

The protein resides in the cytoplasm. The enzyme catalyses S-sulfanyl-L-cysteinyl-[protein] + uridine(34) in tRNA + AH2 + ATP = 2-thiouridine(34) in tRNA + L-cysteinyl-[protein] + A + AMP + diphosphate + H(+). Functionally, catalyzes the 2-thiolation of uridine at the wobble position (U34) of tRNA, leading to the formation of s(2)U34. This Verminephrobacter eiseniae (strain EF01-2) protein is tRNA-specific 2-thiouridylase MnmA.